The chain runs to 369 residues: MAPTKDFSTATNGADSWDDVADFVTKKGHGVKGLSERGIKTLPKPFHQPLEERFSEKKILERASIPLIDMSEWDSPEVVKSICDAAENWGFFQIVNHGVPLETLERVKEATHRFFGLPAEEKNKYSKENSPINNVRFGSSFVPHVEKALEWKDFLSMFYVSXEETNTYWPPICXDQMLEYMRSSEVLIKRLMEVLVVKGLKVKQIDEIREPMLVGSRRVNLNYYPKCPNRELTLGVGRHSDISTFTILLQDQIEVLHVRKLDDTGNTWVHVTPIAGSLIINIGDALQIMSNGRYKSIEHMVVANGTQDRISVPLFVNPKPQAILCPFPEVLANGEKPLYKPVFCSDYSRHFYTKPHDGKKTVDFALINY.

Residues glycine 215–proline 318 form the Fe2OG dioxygenase domain. Tyrosine 224 provides a ligand contact to 2-oxoglutarate. Positions 239, 241, and 299 each coordinate Fe cation. 2-oxoglutarate-binding residues include arginine 309 and serine 311.

It belongs to the iron/ascorbate-dependent oxidoreductase family. The cofactor is L-ascorbate. Fe(2+) is required as a cofactor.

The enzyme catalyses (E)-4-coumaroyl-CoA + 2-oxoglutarate + O2 = (E)-2,4-dihydroxycinnamoyl-CoA + succinate + CO2. It catalyses the reaction (E)-feruloyl-CoA + 2-oxoglutarate + O2 = (E)-6-hydroxyferuloyl-CoA + succinate + CO2. Its pathway is phenylpropanoid metabolism. Functionally, 2-oxoglutarate (OG)- and Fe(II)-dependent dioxygenase (2OGD) involved in scopoletin and umbelliferone biosynthesis. Converts feruloyl CoA into 6'-hydroxyferuloyl CoA, and p-coumaroyl CoA into 2,4-dihydroxycinnamoyl-CoA. The chain is Bi-functional coumaroyl CoA and feruloyl CoA ortho-hydroxylase Diox2 from Ruta graveolens (Common rue).